Reading from the N-terminus, the 643-residue chain is Zinc finger protein 64 (643 aa).

11 C2H2-type zinc fingers span residues 173-195 (HKCEVCGKCFSRKDKLKTHMRCH), 201-223 (YKCKTCDYAAADSSSLNKHLRIH), 229-251 (FKCQICPYASRNSSQLTVHLRSH), 297-322 (FNCRYPGCHFKTVHGMKDLDRHLRIH), 328-350 (HKCEFCDKCFSRKDNLTMHMRCH), 356-378 (HKCHLCDYAAVDSSSLKKHLRIH), 384-406 (YKCQLCPYASRNSSQLTVHLRSH), 412-434 (FQCWLCSAKFKISSDLKRHMIVH), 440-463 (FKCEFCDVRCTMKANLKSHIRIKH), 465-487 (FKCLHCAFQGRDRADLLEHSRLH), and 493-515 (EKCPECSYSCSNPAALRVHSRVH). Residues Cys495, Cys498, His511, His515, Cys523, Cys526, His539, and His544 each coordinate Zn(2+). Basic and acidic residues predominate over residues 538–552 (KHIDKVHREGAKTEN). Residues 538–571 (KHIDKVHREGAKTENRAPPGKDGPGESGPHHVPN) are disordered. Residues 578–600 (FGCDKCGASFVRDDSLRCHRKQH) form a C2H2-type 12 zinc finger.

It belongs to the krueppel C2H2-type zinc-finger protein family. In terms of assembly, interacts with NOTCH1. Widely expressed. Expressed in the brain, spleen, liver, and heart.

It is found in the nucleus. In terms of biological role, may be involved in the regulation of mesenchymal cell differentiation through transactivation of NOTCH1 target genes. The protein is Zinc finger protein 64 of Mus musculus (Mouse).